The following is a 681-amino-acid chain: UvrABC system protein C (681 aa).

The 80-residue stretch at 16-95 (DSPGVYKFRD…IKEYDPRFNV (80 aa)) folds into the GIY-YIG domain. Residues 208 to 243 (GTYIRRLERQMTDAAEEMEYEKAARLRDDIGALKKA) form the UVR domain. Residues 650–681 (EIMEDEEPGTTAGSSQEPVSAGTSDERRGQET) form a disordered region. Over residues 660–672 (TAGSSQEPVSAGT) the composition is skewed to polar residues.

This sequence belongs to the UvrC family. In terms of assembly, interacts with UvrB in an incision complex.

The protein localises to the cytoplasm. Its function is as follows. The UvrABC repair system catalyzes the recognition and processing of DNA lesions. UvrC both incises the 5' and 3' sides of the lesion. The N-terminal half is responsible for the 3' incision and the C-terminal half is responsible for the 5' incision. This chain is UvrABC system protein C, found in Streptomyces avermitilis (strain ATCC 31267 / DSM 46492 / JCM 5070 / NBRC 14893 / NCIMB 12804 / NRRL 8165 / MA-4680).